Consider the following 234-residue polypeptide: Small ribosomal subunit protein eS4 (234 aa).

Residues 39–102 (MPLVVVLRDL…NANYRVVIGM (64 aa)) form the S4 RNA-binding domain.

This sequence belongs to the eukaryotic ribosomal protein eS4 family.

This chain is Small ribosomal subunit protein eS4, found in Methanocella arvoryzae (strain DSM 22066 / NBRC 105507 / MRE50).